Consider the following 824-residue polypeptide: MLQICIRRVTVKNDNAVEHNNQDCFLSRTSSRDESHALHKVRESVCGMVILPDKAHSSIRYQDHQLYFCSASCESKFKAHPDHYFTEDASEHHHHHDHHEVSPDKIKQSHRQAEKEISEGVWTCPMHPEIRRSGPGSCPVCGMALEPLVATASTGTSDELRDMTRRFWLGLLLAFPVLILEMGSHLFPALRNTVPPQYNTWLQLLLASPVVLWCGWPFFARAGMSLRNRSLNMFTLVAMGTGVAWVYSVIATVFPSWFPASFRNMDGLVAIYFEAAAVITVLVLLGQVLELRAREQTSGAITALLNLAPKTARRLDQDGHETDINAEDVLPGDKLRIRPGESIPVDGIVVEGKTTVDESMVTGESMPVTKTEGEPVIGGTINQTGSLIIRAEKVGDETMLSRIVQMVADAQRSRAPIQRMADSVSGWFVPLVILIAVVAFMIWSVWGPEPRMAHGLIAAVSVLIIACPCALGLATPMSIMVGVGKGAQAGVLIKNAEALERLEKVDTLVVDKTGTLTEGSPTVTGIISLNPGGETSLLRVTAAVDKGSQHPLGMAVVKAAQEKGIAIPAVTHFNAPSGKGVSGDVEGQRVVIGNELAMQENSIVIDNQKAVADTLRMEGTTVIYVATDGHLAGLIAISDPVKATTPDALKALRQAGIRIVMLTGDNQLTAEAVARKLGIDEVEAGILPDGKKAVITRLKASGHVVAMAGDGVNDAPALAAADVGIAMGTGTDVAIESAGVTLLKGDLMILNRARHLSEITMKNIRQNLFFAFIYNALGVPVAAGLLYPVYGILLSPVIAAAAMALSSVSVIVNALRLKSVRLGK.

The tract at residues 89–112 is disordered; that stretch reads ASEHHHHHDHHEVSPDKIKQSHRQ. A compositionally biased stretch (basic and acidic residues) spans 98–112; the sequence is HHEVSPDKIKQSHRQ. A run of 6 helical transmembrane segments spans residues 167–187, 200–220, 234–254, 268–288, 427–447, and 455–475; these read FWLG…SHLF, TWLQ…PFFA, FTLV…ATVF, LVAI…LGQV, WFVP…SVWG, and GLIA…GLAT. The active-site 4-aspartylphosphate intermediate is D511. 2 helical membrane passes run 764–784 and 785–805; these read IRQN…VAAG and LLYP…AMAL.

Belongs to the cation transport ATPase (P-type) (TC 3.A.3) family. Type IB subfamily.

The protein localises to the cell membrane. It catalyses the reaction Ag(+)(in) + ATP + H2O = Ag(+)(out) + ADP + phosphate + H(+). In terms of biological role, component of the sil cation-efflux system that confers resistance to silver. This chain is Silver exporting P-type ATPase (silP), found in Salmonella typhimurium.